The following is a 428-amino-acid chain: Glutamate-1-semialdehyde 2,1-aminomutase (428 aa).

Residue K267 is modified to N6-(pyridoxal phosphate)lysine.

The protein belongs to the class-III pyridoxal-phosphate-dependent aminotransferase family. HemL subfamily. As to quaternary structure, homodimer. Pyridoxal 5'-phosphate is required as a cofactor.

It localises to the cytoplasm. It carries out the reaction (S)-4-amino-5-oxopentanoate = 5-aminolevulinate. It functions in the pathway porphyrin-containing compound metabolism; protoporphyrin-IX biosynthesis; 5-aminolevulinate from L-glutamyl-tRNA(Glu): step 2/2. Its pathway is porphyrin-containing compound metabolism; chlorophyll biosynthesis. This Prochlorococcus marinus (strain MIT 9313) protein is Glutamate-1-semialdehyde 2,1-aminomutase.